A 226-amino-acid polypeptide reads, in one-letter code: Protein-L-isoaspartate(D-aspartate) O-methyltransferase (226 aa).

S-adenosyl-L-homocysteine contacts are provided by residues 57–60 (VTIS), His65, Ser89, 115–116 (EH), 147–148 (DG), and Thr222. Residue Ser60 is part of the active site.

Belongs to the methyltransferase superfamily. L-isoaspartyl/D-aspartyl protein methyltransferase family. Monomer.

The protein resides in the cytoplasm. The protein localises to the cytosol. The enzyme catalyses [protein]-L-isoaspartate + S-adenosyl-L-methionine = [protein]-L-isoaspartate alpha-methyl ester + S-adenosyl-L-homocysteine. Initiates the repair of damaged proteins by catalyzing methyl esterification of L-isoaspartyl and D-aspartyl residues produced by spontaneous isomerization and racemization of L-aspartyl and L-asparaginyl residues in aging peptides and proteins. In Drosophila melanogaster (Fruit fly), this protein is Protein-L-isoaspartate(D-aspartate) O-methyltransferase (Pcmt).